The sequence spans 443 residues: Threonine/serine transporter TdcC (443 aa).

11 consecutive transmembrane segments (helical) span residues 22–42 (TTWT…FFPI), 44–64 (AGFG…PIAF), 97–117 (GVVI…IYGV), 135–155 (ALNR…IIWF), 163–183 (VMSF…LSLI), 207–227 (ILVT…FSPI), 259–279 (ASIL…FALS), 319–339 (ASII…LGTL), 366–386 (LSMV…PNIL), 389–409 (IEAM…MYAI), and 422–442 (IDNV…VYKV).

It belongs to the amino acid/polyamine transporter 2 family. SdaC/TdcC subfamily.

The protein resides in the cell inner membrane. It carries out the reaction L-threonine(in) + H(+)(in) = L-threonine(out) + H(+)(out). It catalyses the reaction L-serine(in) + H(+)(in) = L-serine(out) + H(+)(out). Involved in the import of threonine and serine into the cell, with the concomitant import of a proton (symport system). This Escherichia fergusonii (strain ATCC 35469 / DSM 13698 / CCUG 18766 / IAM 14443 / JCM 21226 / LMG 7866 / NBRC 102419 / NCTC 12128 / CDC 0568-73) protein is Threonine/serine transporter TdcC.